The sequence spans 402 residues: MTAASEHLVLVLNSGSSSIKYQLVDPETGEVSAAGLVERIGEDDSAIEHRCGARTIGHEGRIPDHRAGLERVFEMFAETGFDLAGAGLRAVGHRVVHGGEMFHEPTLVTDEVVAAIADFAELAPLHNPANVTGIENARRLLPGVPQVAVFDTAFFHGLPDAAKTYAIDAKIAAEYGIRRYGFHGISHEYVSGRVAEVLDLDPARLRQIVFHLGNGASASAVRGGSPIDTSMGLTPLEGLVMGTRGGDLDPGILGHLARAAGFDVDRIDKLLNREAGLKGMAGVNDFRELRRLIDEGDAAAKLAYDVYVHRLRRYLGAYLIALGGVDAITFTAGVGENSADVRADALAGLENFGIAVDPARNTAKDRGARVISPPAAPVTVLVVPTNEELAIARAADRLVAAG.

Asparagine 13 contributes to the Mg(2+) binding site. ATP is bound at residue lysine 20. Arginine 94 provides a ligand contact to substrate. The active-site Proton donor/acceptor is aspartate 151. ATP-binding positions include histidine 211–glycine 215, aspartate 285–arginine 287, and glycine 333–asparagine 337. Glutamate 387 is a binding site for Mg(2+).

The protein belongs to the acetokinase family. As to quaternary structure, homodimer. Mg(2+) is required as a cofactor. Mn(2+) serves as cofactor.

It is found in the cytoplasm. The catalysed reaction is acetate + ATP = acetyl phosphate + ADP. It functions in the pathway metabolic intermediate biosynthesis; acetyl-CoA biosynthesis; acetyl-CoA from acetate: step 1/2. Functionally, catalyzes the formation of acetyl phosphate from acetate and ATP. Can also catalyze the reverse reaction. This chain is Acetate kinase, found in Nocardia farcinica (strain IFM 10152).